The chain runs to 72 residues: Phaiodotoxin-3 (72 aa).

The region spanning 1 to 72 (KFIRHKDESF…CFGALESKCA (72 aa)) is the LCN-type CS-alpha/beta domain. Disulfide bonds link cysteine 13–cysteine 38, cysteine 23–cysteine 50, cysteine 27–cysteine 52, and cysteine 63–cysteine 71.

This sequence belongs to the long (4 C-C) scorpion toxin superfamily. Sodium channel inhibitor family. As to expression, expressed by the venom gland.

The protein resides in the secreted. In terms of biological role, sodium channel (Nav) specific neurotoxin. In Anuroctonus phaiodactylus (Mafia scorpion), this protein is Phaiodotoxin-3.